The chain runs to 402 residues: NADH-quinone oxidoreductase subunit D (402 aa).

The protein belongs to the complex I 49 kDa subunit family. NDH-1 is composed of 14 different subunits. Subunits NuoB, C, D, E, F, and G constitute the peripheral sector of the complex.

It is found in the cell inner membrane. The enzyme catalyses a quinone + NADH + 5 H(+)(in) = a quinol + NAD(+) + 4 H(+)(out). Its function is as follows. NDH-1 shuttles electrons from NADH, via FMN and iron-sulfur (Fe-S) centers, to quinones in the respiratory chain. The immediate electron acceptor for the enzyme in this species is believed to be ubiquinone. Couples the redox reaction to proton translocation (for every two electrons transferred, four hydrogen ions are translocated across the cytoplasmic membrane), and thus conserves the redox energy in a proton gradient. This Rhodopseudomonas palustris (strain TIE-1) protein is NADH-quinone oxidoreductase subunit D.